Consider the following 237-residue polypeptide: MKVGIIGAMKEEVTLLCQKIQSCQTLTRAGCSIYSGFLGETNVVLLQSGIGKTSAALGTTLLLEYFQPDILINTGSAAGLWPDLKIGDIVISTEVRYHDVNVTAFGYEWGQMALCPPAFFADKKLIEIVLECVKNLNLNAVQGLICSGDAFINGDQALDRIRTFFPKAVAVEMEAAAIAQVCHQFETPFVVIRAISDVADQASHLSFEQFLCIAAQRSSTVIENMLPILAETYCSIN.

Glu-12 functions as the Proton acceptor in the catalytic mechanism. Substrate is bound by residues Ala-78, Ile-152, and Met-173 to Glu-174. Catalysis depends on Asp-197, which acts as the Proton donor.

The protein belongs to the PNP/UDP phosphorylase family. MtnN subfamily. In terms of assembly, homodimer.

It catalyses the reaction S-adenosyl-L-homocysteine + H2O = S-(5-deoxy-D-ribos-5-yl)-L-homocysteine + adenine. It carries out the reaction S-methyl-5'-thioadenosine + H2O = 5-(methylsulfanyl)-D-ribose + adenine. The enzyme catalyses 5'-deoxyadenosine + H2O = 5-deoxy-D-ribose + adenine. The protein operates within amino-acid biosynthesis; L-methionine biosynthesis via salvage pathway; S-methyl-5-thio-alpha-D-ribose 1-phosphate from S-methyl-5'-thioadenosine (hydrolase route): step 1/2. In terms of biological role, catalyzes the irreversible cleavage of the glycosidic bond in both 5'-methylthioadenosine (MTA) and S-adenosylhomocysteine (SAH/AdoHcy) to adenine and the corresponding thioribose, 5'-methylthioribose and S-ribosylhomocysteine, respectively. Also cleaves 5'-deoxyadenosine, a toxic by-product of radical S-adenosylmethionine (SAM) enzymes, into 5-deoxyribose and adenine. Thus, is required for in vivo function of the radical SAM enzymes biotin synthase and lipoic acid synthase, that are inhibited by 5'-deoxyadenosine accumulation. This is 5'-methylthioadenosine/S-adenosylhomocysteine nucleosidase from Hamiltonella defensa subsp. Acyrthosiphon pisum (strain 5AT).